The sequence spans 438 residues: Na(+)/H(+) antiporter NhaA (438 aa).

A run of 11 helical transmembrane segments spans residues 23-43 (FGGIFLFLNAVLAMVVANSFL), 62-82 (FFIGFSLHNWIDDVLMALFFL), 104-124 (SFPVIAALGGMIAPGLIYFFL), 133-153 (GFGIPMATDIAFALGVIMLLG), 162-182 (VFLITLAVADDLGAIIVIALF), 185-205 (TNLKFAWLLGALGVVLLLALL), 221-241 (VLLWFCVHQSGIHATIAAVVL), 302-322 (FLAPISGYFIMPLFAFANAGV), 337-357 (FGVILGLCLGKPLGIFLITFI), 372-392 (WWHILGAGLLAGIGFTMSMFI), and 410-430 (IAILLGSLISGIIGALYLFAL).

The protein belongs to the NhaA Na(+)/H(+) (TC 2.A.33) antiporter family.

The protein localises to the cell inner membrane. The catalysed reaction is Na(+)(in) + 2 H(+)(out) = Na(+)(out) + 2 H(+)(in). In terms of biological role, na(+)/H(+) antiporter that extrudes sodium in exchange for external protons. This Helicobacter pylori (strain P12) protein is Na(+)/H(+) antiporter NhaA.